Reading from the N-terminus, the 129-residue chain is Aspartate 1-decarboxylase (129 aa).

The Schiff-base intermediate with substrate; via pyruvic acid role is filled by S25. S25 bears the Pyruvic acid (Ser) mark. Residue T57 participates in substrate binding. The active-site Proton donor is Y58. A substrate-binding site is contributed by 73 to 75; that stretch reads GAA.

It belongs to the PanD family. Heterooctamer of four alpha and four beta subunits. The cofactor is pyruvate. Is synthesized initially as an inactive proenzyme, which is activated by self-cleavage at a specific serine bond to produce a beta-subunit with a hydroxyl group at its C-terminus and an alpha-subunit with a pyruvoyl group at its N-terminus.

It localises to the cytoplasm. The catalysed reaction is L-aspartate + H(+) = beta-alanine + CO2. It participates in cofactor biosynthesis; (R)-pantothenate biosynthesis; beta-alanine from L-aspartate: step 1/1. Functionally, catalyzes the pyruvoyl-dependent decarboxylation of aspartate to produce beta-alanine. This is Aspartate 1-decarboxylase from Hydrogenovibrio crunogenus (strain DSM 25203 / XCL-2) (Thiomicrospira crunogena).